Reading from the N-terminus, the 303-residue chain is Phosphatidylglycerol--prolipoprotein diacylglyceryl transferase (303 aa).

Transmembrane regions (helical) follow at residues 18–38, 58–78, 106–126, and 133–153; these read LGPF…LVGL, LLPI…VAFE, IWGG…SIIF, and EHFW…QAIG. Arg154 contributes to the a 1,2-diacyl-sn-glycero-3-phospho-(1'-sn-glycerol) binding site. Helical transmembrane passes span 193-213, 223-243, and 266-286; these read PTFL…IFLF, LPPG…RFWI, and IAQL…WRIY.

This sequence belongs to the Lgt family.

The protein localises to the cell inner membrane. The enzyme catalyses L-cysteinyl-[prolipoprotein] + a 1,2-diacyl-sn-glycero-3-phospho-(1'-sn-glycerol) = an S-1,2-diacyl-sn-glyceryl-L-cysteinyl-[prolipoprotein] + sn-glycerol 1-phosphate + H(+). It participates in protein modification; lipoprotein biosynthesis (diacylglyceryl transfer). Functionally, catalyzes the transfer of the diacylglyceryl group from phosphatidylglycerol to the sulfhydryl group of the N-terminal cysteine of a prolipoprotein, the first step in the formation of mature lipoproteins. This chain is Phosphatidylglycerol--prolipoprotein diacylglyceryl transferase, found in Prochlorococcus marinus (strain NATL2A).